A 466-amino-acid polypeptide reads, in one-letter code: 3-isopropylmalate dehydratase large subunit (466 aa).

Positions 347, 407, and 410 each coordinate [4Fe-4S] cluster.

This sequence belongs to the aconitase/IPM isomerase family. LeuC type 1 subfamily. As to quaternary structure, heterodimer of LeuC and LeuD. Requires [4Fe-4S] cluster as cofactor.

The enzyme catalyses (2R,3S)-3-isopropylmalate = (2S)-2-isopropylmalate. Its pathway is amino-acid biosynthesis; L-leucine biosynthesis; L-leucine from 3-methyl-2-oxobutanoate: step 2/4. Functionally, catalyzes the isomerization between 2-isopropylmalate and 3-isopropylmalate, via the formation of 2-isopropylmaleate. The protein is 3-isopropylmalate dehydratase large subunit of Serratia proteamaculans (strain 568).